Reading from the N-terminus, the 778-residue chain is Dynein axonemal intermediate chain 4 (778 aa).

WD repeat units follow at residues 477 to 517, 526 to 573, 586 to 629, 633 to 673, 676 to 715, and 721 to 760; these read HCES…QTPI, LHTS…ECVD, RHIS…QYLE, AHKR…PVMG, SGQR…LDPT, and SPGV…AGGG.

As to quaternary structure, part of the multisubunit axonemal dynein complex formed at least of two heavy chains and a number of intermediate and light chains.

The protein localises to the cytoplasm. It is found in the cytoskeleton. Its subcellular location is the flagellum axoneme. The protein resides in the cilium axoneme. It localises to the dynein axonemal particle. Functionally, plays a critical role in the assembly of axonemal dynein complex. Plays a key role in ciliary motility. In Danio rerio (Zebrafish), this protein is Dynein axonemal intermediate chain 4.